We begin with the raw amino-acid sequence, 122 residues long: MIQSFTRLAVADNSGAKELMCIKVLGGSKRRYATVGDVIVASVKKALPNGKVKKGQVVKAVIVRTKKEIHRDNGSLIRFDENAAVILDNKREPIGTRIFGPVGREVRYGGFMKIVSLAPEVL.

Belongs to the universal ribosomal protein uL14 family. As to quaternary structure, part of the 50S ribosomal subunit. Forms a cluster with proteins L3 and L19. In the 70S ribosome, L14 and L19 interact and together make contacts with the 16S rRNA in bridges B5 and B8.

Its function is as follows. Binds to 23S rRNA. Forms part of two intersubunit bridges in the 70S ribosome. This is Large ribosomal subunit protein uL14 from Campylobacter jejuni subsp. jejuni serotype O:6 (strain 81116 / NCTC 11828).